Reading from the N-terminus, the 588-residue chain is MSDKKQKGLEWQDNPLSDNERLKEESNHLRGTILDDLEDGLTGGFKGDNFQLIRFHGMYEQDDRDIRAERQEEKLEPRKFMLLRCRLPGGIIKPEQWIEIDKFARDNNYYQSIRLTNRQTFQYHGVPKTKLQDMHRLLHKLGLDSIATASDMNRNVLCSSNPVESELHQEAYEWAKKISEHLLPRTNGYLDVWISGKKVQSSDSFLGQEDEPILGNRYLPRKYKTAVVLPPLNDVDLYSNDMNFVGIKDEKTGKLAGFNVLVGGGLSFEHGNTKTYPNIALELGYVPVEDTLKAAESIVTTQRDFGNRADRKNARLRYTIQNMTLEGFREEVERRMGRRFEAIRPFEFTERGDRIGWVKGIDKKWHLTCFIESGRLVDKPDLPLMTGMLELAKVHKGDFRITANQNIIIANVAEEDKRQIEDIARQYGLIRKITKLRENAMSCVSFPTCPLAMAESERVLPEFIDELDKIMAKHHVEQDYIVTRITGCPNGCGRAMLAEIGLVGKAVGRYNLHLGGNIAGTRIPRLYKENITLDEILSELDGLIARWATERDQGEGFGDFVLRVGIIKPVVNPVVDFWDENLIPTVAV.

The span at 1-10 shows a compositional bias: basic and acidic residues; that stretch reads MSDKKQKGLE. The interval 1–20 is disordered; sequence MSDKKQKGLEWQDNPLSDNE. Cys-443, Cys-449, Cys-488, and Cys-492 together coordinate [4Fe-4S] cluster. A siroheme-binding site is contributed by Cys-492.

The protein belongs to the nitrite and sulfite reductase 4Fe-4S domain family. In terms of assembly, alpha(8)-beta(8). The alpha component is a flavoprotein, the beta component is a hemoprotein. Requires siroheme as cofactor. [4Fe-4S] cluster serves as cofactor.

The enzyme catalyses hydrogen sulfide + 3 NADP(+) + 3 H2O = sulfite + 3 NADPH + 4 H(+). Its pathway is sulfur metabolism; hydrogen sulfide biosynthesis; hydrogen sulfide from sulfite (NADPH route): step 1/1. Functionally, component of the sulfite reductase complex that catalyzes the 6-electron reduction of sulfite to sulfide. This is one of several activities required for the biosynthesis of L-cysteine from sulfate. In Mannheimia succiniciproducens (strain KCTC 0769BP / MBEL55E), this protein is Sulfite reductase [NADPH] hemoprotein beta-component.